The primary structure comprises 616 residues: Coagulation factor XII (616 aa).

The signal sequence occupies residues 1–19 (MRALLLLGILLVSLESALL). Positions 42–90 (VTGEPCHFPFQYYRQLYYKCIQRGQRGPRPWCATTPNFEKDQRWAYCLE) constitute a Fibronectin type-II domain. 13 cysteine pairs are disulfide-bonded: cysteine 47/cysteine 73, cysteine 61/cysteine 88, cysteine 98/cysteine 110, cysteine 104/cysteine 119, cysteine 121/cysteine 130, cysteine 135/cysteine 163, cysteine 161/cysteine 170, cysteine 178/cysteine 189, cysteine 183/cysteine 198, cysteine 200/cysteine 209, cysteine 217/cysteine 295, cysteine 238/cysteine 277, and cysteine 266/cysteine 290. The EGF-like 1 domain maps to 94–131 (VKDHCNKGNPCQKGGTCVNMPNGPHCICPDHFTGKHCQ). Threonine 109 is a glycosylation site (O-linked (Fuc) threonine). The 41-residue stretch at 133-173 (EKCFEPQFLQFFQENEIWHRFEPAGVSKCQCKGPKAQCKPV) folds into the Fibronectin type-I domain. The EGF-like 2 domain maps to 174 to 210 (ASQVCSTNPCLNGGSCLQTEGHRLCRCPTGYAGRLCD). A Kringle domain is found at 216–295 (RCYSDRGLSY…SWQYCRLARC (80 aa)). Asparagine 249, asparagine 271, and asparagine 335 each carry an N-linked (GlcNAc...) asparagine glycan. The segment at 303–342 (PPILTPTQSPSEHQDSPLLSREPQPTTQTPSQNLTSAWCA) is disordered. Positions 325–338 (PQPTTQTPSQNLTS) are enriched in polar residues. 7 cysteine pairs are disulfide-bonded: cysteine 358–cysteine 485, cysteine 396–cysteine 412, cysteine 404–cysteine 474, cysteine 435–cysteine 438, cysteine 501–cysteine 570, cysteine 533–cysteine 549, and cysteine 560–cysteine 591. The Peptidase S1 domain maps to 372–615 (IVGGLVALPG…YLAWIQEHTT (244 aa)). The active-site Charge relay system is histidine 411. Asparagine 432 carries N-linked (GlcNAc...) asparagine glycosylation. Catalysis depends on aspartate 460, which acts as the Charge relay system. Residue serine 564 is the Charge relay system of the active site.

Belongs to the peptidase S1 family. Interacts with HRG; the interaction, which is enhanced in the presence of zinc ions and inhibited by heparin-binding, inhibits factor XII autoactivation and contact-initiated coagulation. Post-translationally, O- and N-glycosylated.

The protein localises to the secreted. It catalyses the reaction Selective cleavage of Arg-|-Ile bonds in factor VII to form factor VIIa and factor XI to form factor XIa.. Activity is promoted in the presence of negatively charged surfaces. Functionally, factor XII is a serum glycoprotein that participates in the initiation of blood coagulation, fibrinolysis, and the generation of bradykinin and angiotensin. Prekallikrein is cleaved by factor XII to form kallikrein, which then cleaves factor XII first to alpha-factor XIIa and then trypsin cleaves it to beta-factor XIIa. Alpha-factor XIIa activates factor XI to factor XIa. This is Coagulation factor XII (F12) from Sus scrofa (Pig).